A 115-amino-acid polypeptide reads, in one-letter code: MSLDMQEWRAETTAIVNELLADGSNPDLEYDIEHHFACQDFDQLEKAAVDLFKAGFEVTDAEEMELDDGAPIFCFDATIERKLDIETIVADIEKMLPILKKYGVDYDGWGTYFQE.

The protein belongs to the RraB family. Interacts with the C-terminal region of Rne.

It localises to the cytoplasm. Globally modulates RNA abundance by binding to RNase E (Rne) and regulating its endonucleolytic activity. Can modulate Rne action in a substrate-dependent manner by altering the composition of the degradosome. This is Regulator of ribonuclease activity B from Aeromonas salmonicida (strain A449).